A 375-amino-acid chain; its full sequence is Erythronate-4-phosphate dehydrogenase (375 aa).

2 residues coordinate substrate: Ser45 and Thr66. Residues Asp146, Thr175, 206 to 208 (ASR), and Asp232 contribute to the NAD(+) site. Arg208 is an active-site residue. Glu237 is an active-site residue. The Proton donor role is filled by His254. Residue Gly257 coordinates NAD(+). Tyr258 contributes to the substrate binding site.

The protein belongs to the D-isomer specific 2-hydroxyacid dehydrogenase family. PdxB subfamily. In terms of assembly, homodimer.

Its subcellular location is the cytoplasm. It catalyses the reaction 4-phospho-D-erythronate + NAD(+) = (R)-3-hydroxy-2-oxo-4-phosphooxybutanoate + NADH + H(+). It functions in the pathway cofactor biosynthesis; pyridoxine 5'-phosphate biosynthesis; pyridoxine 5'-phosphate from D-erythrose 4-phosphate: step 2/5. Catalyzes the oxidation of erythronate-4-phosphate to 3-hydroxy-2-oxo-4-phosphonooxybutanoate. The chain is Erythronate-4-phosphate dehydrogenase from Photorhabdus laumondii subsp. laumondii (strain DSM 15139 / CIP 105565 / TT01) (Photorhabdus luminescens subsp. laumondii).